The chain runs to 338 residues: MSRQPILDIKGLRTVFRTRAREIVAVNDVDIVVNPGETVALVGESGSGKSVTSLSIMRLLARKVGFIDAGSIILRGKSGQTVDLAAIDEEAMRRIRGNDIGMVFQEPMTSLNPVYTIGDQIGEPLRVHRGTSRREALEAAVELLDRVGIPDARRRAGQYPHELSGGMRQRATIAMALICNPTLLIADEPTTALDVTIQAQILDLMQKLQSESGMGMLFVTHNLGVVAEIAQRVVVMYAGRIVESGPVKEVFRNPRHPYTMGLLRSMPRLGDATEMKRRGEKLNTIPGMVPGLANLPSGCAFAPRCSFAVEACHAAVPPLASVNKHHGSRCIRWQEIAA.

The 254-residue stretch at 10-263 (KGLRTVFRTR…PRHPYTMGLL (254 aa)) folds into the ABC transporter domain. Residue 43–50 (GESGSGKS) coordinates ATP.

Belongs to the ABC transporter superfamily. As to quaternary structure, the complex is composed of two ATP-binding proteins (BMEII0863 and BMEII0864), two transmembrane proteins (BMEII0860 and BMEII0861) and a solute-binding protein (BMEII0859).

The protein resides in the cell inner membrane. In terms of biological role, probably part of an ABC transporter complex that could be involved in peptide import. Probably responsible for energy coupling to the transport system. This is Putative peptide import ATP-binding protein BMEII0863 from Brucella melitensis biotype 1 (strain ATCC 23456 / CCUG 17765 / NCTC 10094 / 16M).